Reading from the N-terminus, the 492-residue chain is 2-succinylbenzoate--CoA ligase (492 aa).

This sequence belongs to the ATP-dependent AMP-binding enzyme family. MenE subfamily.

The enzyme catalyses 2-succinylbenzoate + ATP + CoA = 2-succinylbenzoyl-CoA + AMP + diphosphate. The protein operates within quinol/quinone metabolism; 1,4-dihydroxy-2-naphthoate biosynthesis; 1,4-dihydroxy-2-naphthoate from chorismate: step 5/7. Its pathway is quinol/quinone metabolism; menaquinone biosynthesis. In terms of biological role, converts 2-succinylbenzoate (OSB) to 2-succinylbenzoyl-CoA (OSB-CoA). The polypeptide is 2-succinylbenzoate--CoA ligase (Staphylococcus aureus (strain Mu3 / ATCC 700698)).